Here is a 274-residue protein sequence, read N- to C-terminus: Large ribosomal subunit protein uL2 (274 aa).

2 disordered regions span residues 28 to 54 and 221 to 274; these read KPYA…TRHI and RGTA…RTKK. The span at 39–49 shows a compositional bias: polar residues; it reads KTGGRNNNGRI.

This sequence belongs to the universal ribosomal protein uL2 family. Part of the 50S ribosomal subunit. Forms a bridge to the 30S subunit in the 70S ribosome.

In terms of biological role, one of the primary rRNA binding proteins. Required for association of the 30S and 50S subunits to form the 70S ribosome, for tRNA binding and peptide bond formation. It has been suggested to have peptidyltransferase activity; this is somewhat controversial. Makes several contacts with the 16S rRNA in the 70S ribosome. This is Large ribosomal subunit protein uL2 from Photorhabdus laumondii subsp. laumondii (strain DSM 15139 / CIP 105565 / TT01) (Photorhabdus luminescens subsp. laumondii).